A 398-amino-acid polypeptide reads, in one-letter code: tRNA-specific 2-thiouridylase MnmA (398 aa).

ATP is bound by residues 20-27 and leucine 46; that span reads AMSGGVDS. Cysteine 114 (nucleophile) is an active-site residue. A disulfide bridge links cysteine 114 with cysteine 210. Glycine 138 contacts ATP. Residues 160–162 form an interaction with tRNA region; it reads RDQ. The Cysteine persulfide intermediate role is filled by cysteine 210.

It belongs to the MnmA/TRMU family.

It is found in the cytoplasm. It carries out the reaction S-sulfanyl-L-cysteinyl-[protein] + uridine(34) in tRNA + AH2 + ATP = 2-thiouridine(34) in tRNA + L-cysteinyl-[protein] + A + AMP + diphosphate + H(+). Its function is as follows. Catalyzes the 2-thiolation of uridine at the wobble position (U34) of tRNA, leading to the formation of s(2)U34. The sequence is that of tRNA-specific 2-thiouridylase MnmA from Brucella suis (strain ATCC 23445 / NCTC 10510).